We begin with the raw amino-acid sequence, 122 residues long: Small ribosomal subunit protein uS8c (122 aa).

The protein belongs to the universal ribosomal protein uS8 family. Part of the 30S ribosomal subunit.

It localises to the plastid. The protein resides in the chloroplast. In terms of biological role, one of the primary rRNA binding proteins, it binds directly to 16S rRNA central domain where it helps coordinate assembly of the platform of the 30S subunit. The chain is Small ribosomal subunit protein uS8c (rps8) from Ostreococcus tauri.